We begin with the raw amino-acid sequence, 554 residues long: Glutamine--tRNA ligase (554 aa).

Residues 34–44 (PEPNGYLHIGH) carry the 'HIGH' region motif. Residues 35–37 (EPN) and 41–47 (HIGHAKS) each bind ATP. L-glutamine contacts are provided by D67 and Y212. Residues T231, 261–262 (RL), and 269–271 (MSK) each bind ATP. The 'KMSKS' region signature appears at 268 to 272 (VMSKR). Residues 317–324 (TKQDNTIE) are interaction with tRNA.

Belongs to the class-I aminoacyl-tRNA synthetase family. Monomer.

It is found in the cytoplasm. The enzyme catalyses tRNA(Gln) + L-glutamine + ATP = L-glutaminyl-tRNA(Gln) + AMP + diphosphate. The sequence is that of Glutamine--tRNA ligase from Shigella dysenteriae serotype 1 (strain Sd197).